A 30-amino-acid polypeptide reads, in one-letter code: Glutathione S-transferase (30 aa).

The protein belongs to the GST superfamily. As to quaternary structure, monomer and homodimer.

It is found in the cytoplasm. The enzyme catalyses RX + glutathione = an S-substituted glutathione + a halide anion + H(+). Conjugation of reduced glutathione to a wide number of exogenous and endogenous hydrophobic electrophiles. This Pseudomonas fluorescens protein is Glutathione S-transferase.